A 379-amino-acid polypeptide reads, in one-letter code: Ribosomal RNA large subunit methyltransferase G (379 aa).

Belongs to the methyltransferase superfamily. RlmG family.

It localises to the cytoplasm. It catalyses the reaction guanosine(1835) in 23S rRNA + S-adenosyl-L-methionine = N(2)-methylguanosine(1835) in 23S rRNA + S-adenosyl-L-homocysteine + H(+). Functionally, specifically methylates the guanine in position 1835 (m2G1835) of 23S rRNA. The polypeptide is Ribosomal RNA large subunit methyltransferase G (Serratia proteamaculans (strain 568)).